The following is a 689-amino-acid chain: Glycine--tRNA ligase beta subunit (689 aa).

Belongs to the class-II aminoacyl-tRNA synthetase family. In terms of assembly, tetramer of two alpha and two beta subunits.

It is found in the cytoplasm. The catalysed reaction is tRNA(Gly) + glycine + ATP = glycyl-tRNA(Gly) + AMP + diphosphate. This is Glycine--tRNA ligase beta subunit from Escherichia coli (strain K12 / MC4100 / BW2952).